The chain runs to 199 residues: Cell division protein SepF (199 aa).

The tract at residues 15-79 (TEDGDETEVQ…PQPQQKSSTE (65 aa)) is disordered.

This sequence belongs to the SepF family. As to quaternary structure, homodimer. Interacts with FtsZ.

It is found in the cytoplasm. Its function is as follows. Cell division protein that is part of the divisome complex and is recruited early to the Z-ring. Probably stimulates Z-ring formation, perhaps through the cross-linking of FtsZ protofilaments. Its function overlaps with FtsA. The sequence is that of Cell division protein SepF from Streptococcus sanguinis (strain SK36).